The following is a 179-amino-acid chain: Natural killer cells antigen CD94 (179 aa).

The Cytoplasmic portion of the chain corresponds to 1–10 (MAVFKTTLWR). The chain crosses the membrane as a helical; Signal-anchor for type II membrane protein span at residues 11-31 (LISGTLGIICLSLMATLGILL). Topologically, residues 32 to 179 (KNSFTKLSIE…NRYICKQQLI (148 aa)) are extracellular. Cystine bridges form between C58/C70 and C61/C72. Residues 68–175 (YRCNCYFISS…CEDKNRYICK (108 aa)) form the C-type lectin domain. N-linked (GlcNAc...) asparagine glycans are attached at residues N83 and N132. 2 cysteine pairs are disulfide-bonded: C89-C174 and C152-C166.

Can form disulfide-bonded heterodimer with NKG2 family members KLRC1 and KLRC2. KLRD1-KLRC1 heterodimer interacts with peptide-bound MHC-E-B2M heterotrimeric complex. KLRD1 plays a prominent role in directly interacting with MHC-E. KLRD1-KLRC1 interacts with much higher affinity with peptide-bound MHC-E-B2M than KLRD1-KLRC2. Interacts with the adapter protein TYROBP/DAP12; this interaction is required for cell surface expression and cell activation. As to expression, natural killer cells.

Its subcellular location is the cell membrane. Immune receptor involved in self-nonself discrimination. In complex with KLRC1 or KLRC2 on cytotoxic and regulatory lymphocyte subsets, recognizes non-classical major histocompatibility (MHC) class Ib molecule MHC-E loaded with self-peptides derived from the signal sequence of classical MHC class Ia and non-classical MHC class Ib molecules. Enables cytotoxic cells to monitor the expression of MHC class I molecules in healthy cells and to tolerate self. Primarily functions as a ligand binding subunit as it lacks the capacity to signal. Its function is as follows. KLRD1-KLRC1 acts as an immune inhibitory receptor. Key inhibitory receptor on natural killer (NK) cells that regulates their activation and effector functions. Dominantly counteracts T cell receptor signaling on a subset of memory/effector CD8-positive T cells as part of an antigen-driven response to avoid autoimmunity. On intraepithelial CD8-positive gamma-delta regulatory T cells triggers TGFB1 secretion, which in turn limits the cytotoxic programming of intraepithelial CD8-positive alpha-beta T cells, distinguishing harmless from pathogenic antigens. In MHC-E-rich tumor microenvironment, acts as an immune inhibitory checkpoint and may contribute to progressive loss of effector functions of NK cells and tumor-specific T cells, a state known as cell exhaustion. Upon MHC-E-peptide binding, transmits intracellular signals through KLRC1 immunoreceptor tyrosine-based inhibition motifs (ITIMs) by recruiting INPP5D/SHIP-1 and INPPL1/SHIP-2 tyrosine phosphatases to ITIMs, and ultimately opposing signals transmitted by activating receptors through dephosphorylation of proximal signaling molecules. In terms of biological role, KLRD1-KLRC2 acts as an immune activating receptor. On cytotoxic lymphocyte subsets recognizes MHC-E loaded with signal sequence-derived peptides from non-classical MHC class Ib MHC-G molecules, likely playing a role in the generation and effector functions of adaptive NK cells and in maternal-fetal tolerance during pregnancy. Regulates the effector functions of terminally differentiated cytotoxic lymphocyte subsets, and in particular may play a role in adaptive NK cell response to viral infection. Upon MHC-E-peptide binding, transmits intracellular signals via the adapter protein TYROBP/DAP12, triggering the phosphorylation of proximal signaling molecules and cell activation. The protein is Natural killer cells antigen CD94 (KLRD1) of Pan troglodytes (Chimpanzee).